We begin with the raw amino-acid sequence, 531 residues long: DNA damage-binding protein cmr1 (531 aa).

2 disordered regions span residues 37 to 83 and 218 to 264; these read GIFP…RGIA and DASQ…MHIH. Basic residues predominate over residues 53-64; the sequence is KPKKKPAPKKIK. A WD 1 repeat occupies 186–227; that stretch reads VTPERIYTMTFHPSEAKPLIFAGDKMGNLGVLDASQERPVSS. Over residues 233–245 the composition is skewed to acidic residues; sequence GDEEEQEDDDDPD. WD repeat units follow at residues 253–293, 300–340, 345–385, 392–431, 454–497, and 500–531; these read PHTR…SVET, SDDV…RTAV, LSEK…HDDP, LSRL…ASWE, GRWV…LAQL, and DGIT…CLWM.

This sequence belongs to the WD repeat DDB2/WDR76 family.

Functionally, DNA-binding protein that binds to both single- and double-stranded DNA. Binds preferentially to UV-damaged DNA. May be involved in DNA-metabolic processes. The protein is DNA damage-binding protein cmr1 of Aspergillus clavatus (strain ATCC 1007 / CBS 513.65 / DSM 816 / NCTC 3887 / NRRL 1 / QM 1276 / 107).